We begin with the raw amino-acid sequence, 389 residues long: Galactokinase (389 aa).

34 to 37 (EHTD) contributes to the substrate binding site. Residues Ser-68 and 125–131 (GSGLSSS) contribute to the ATP site. Mg(2+) contacts are provided by Ser-131 and Glu-163. Asp-175 (proton acceptor) is an active-site residue. Tyr-225 serves as a coordination point for substrate.

This sequence belongs to the GHMP kinase family. GalK subfamily.

It localises to the cytoplasm. It catalyses the reaction alpha-D-galactose + ATP = alpha-D-galactose 1-phosphate + ADP + H(+). The protein operates within carbohydrate metabolism; galactose metabolism. In terms of biological role, catalyzes the transfer of the gamma-phosphate of ATP to D-galactose to form alpha-D-galactose-1-phosphate (Gal-1-P). This is Galactokinase from Clostridium acetobutylicum (strain ATCC 824 / DSM 792 / JCM 1419 / IAM 19013 / LMG 5710 / NBRC 13948 / NRRL B-527 / VKM B-1787 / 2291 / W).